A 166-amino-acid chain; its full sequence is Ferric nitrobindin-like protein (166 aa).

Positions 21–27 match the GXWXGXG motif; that stretch reads GHWEGEG.

It belongs to the nitrobindin family.

In Cutibacterium acnes (strain DSM 16379 / KPA171202) (Propionibacterium acnes), this protein is Ferric nitrobindin-like protein.